The following is a 71-amino-acid chain: Large ribosomal subunit protein bL31 (71 aa).

Zn(2+) is bound by residues cysteine 16, cysteine 18, cysteine 37, and cysteine 40.

Belongs to the bacterial ribosomal protein bL31 family. Type A subfamily. In terms of assembly, part of the 50S ribosomal subunit. Zn(2+) serves as cofactor.

In terms of biological role, binds the 23S rRNA. The protein is Large ribosomal subunit protein bL31 of Solidesulfovibrio magneticus (strain ATCC 700980 / DSM 13731 / RS-1) (Desulfovibrio magneticus).